We begin with the raw amino-acid sequence, 647 residues long: Threonine--tRNA ligase (647 aa).

The region spanning M1–T61 is the TGS domain. Residues D242 to P540 are catalytic. C336, H387, and H517 together coordinate Zn(2+).

The protein belongs to the class-II aminoacyl-tRNA synthetase family. As to quaternary structure, homodimer. The cofactor is Zn(2+).

It is found in the cytoplasm. It catalyses the reaction tRNA(Thr) + L-threonine + ATP = L-threonyl-tRNA(Thr) + AMP + diphosphate + H(+). Catalyzes the attachment of threonine to tRNA(Thr) in a two-step reaction: L-threonine is first activated by ATP to form Thr-AMP and then transferred to the acceptor end of tRNA(Thr). Also edits incorrectly charged L-seryl-tRNA(Thr). This chain is Threonine--tRNA ligase, found in Streptococcus pneumoniae serotype 4 (strain ATCC BAA-334 / TIGR4).